We begin with the raw amino-acid sequence, 383 residues long: Hydroxymethylglutaryl-CoA synthase (383 aa).

D29 is a binding site for (3S)-3-hydroxy-3-methylglutaryl-CoA. Catalysis depends on E79, which acts as the Proton donor/acceptor. Positions 111, 152, 201, 233, 242, 275, and 308 each coordinate (3S)-3-hydroxy-3-methylglutaryl-CoA. Catalysis depends on C111, which acts as the Acyl-thioester intermediate. H233 serves as the catalytic Proton donor/acceptor.

This sequence belongs to the thiolase-like superfamily. HMG-CoA synthase family. In terms of assembly, homodimer.

The enzyme catalyses acetoacetyl-CoA + acetyl-CoA + H2O = (3S)-3-hydroxy-3-methylglutaryl-CoA + CoA + H(+). It functions in the pathway metabolic intermediate biosynthesis; (R)-mevalonate biosynthesis; (R)-mevalonate from acetyl-CoA: step 2/3. With respect to regulation, is sensitive to feedback substrate inhibition by acetoacetyl-CoA. Is inactivated by hymeglusin, which also blocks the growth of E.faecalis, indicating the critical role that the mevalonate pathway plays in isoprenoid biosynthesis. Its function is as follows. Catalyzes the condensation of acetyl-CoA with acetoacetyl-CoA to form 3-hydroxy-3-methylglutaryl-CoA (HMG-CoA). Functions in the mevalonate (MVA) pathway leading to isopentenyl diphosphate (IPP), a key precursor for the biosynthesis of isoprenoid compounds. The sequence is that of Hydroxymethylglutaryl-CoA synthase (mvaS) from Enterococcus faecalis (Streptococcus faecalis).